Reading from the N-terminus, the 445-residue chain is MATRIASMRFRCALFQSALTLGRNEVNIKRYVRRRRAVSGVVSVNEPTEISEGVISQTSERSSQHNNDITRNTDKSSIENPVSPNNSQPVQFSHINRQKVINLTSRTRFGEVDGLLYEKLHPGDKSLAKLARIAGSKKLREHQVVLEGKHLVCSALDAGAEAQTLYFSSVDALRELPLDKLRQTNVVKVKMEDAQVWSELDTSQEIIAIFKRPEASRLTFSEEKYGRAVPLTLICDTVRDPGNLGSVLRSAAAAGCHSVLLTKGCVDIWELKVLRAAMGAHFRLPIIPNLTWTDISNHLPKTSTVHVADNHSTTMGKHNDNTTPQKHRRPSDYGWVKGHQYQSKAHDDDDANDLCSLEDYCDENSKSLETQLYYTDWVAGHTSLIIGGETHGLSREALQLAERTSGRRLLIPMVDGVDSLNSAIAAGVLLFEGRKQLLSLEKIRV.

The transit peptide at 1–37 (MATRIASMRFRCALFQSALTLGRNEVNIKRYVRRRRA) directs the protein to the mitochondrion. Disordered regions lie at residues 52–90 (EGVISQTSERSSQHNNDITRNTDKSSIENPVSPNNSQPV) and 311–334 (HSTTMGKHNDNTTPQKHRRPSDYG). Polar residues-rich tracts occupy residues 54 to 70 (VISQTSERSSQHNNDIT), 78 to 90 (IENPVSPNNSQPV), and 311 to 324 (HSTTMGKHNDNTTP). The S-adenosyl-L-methionine site is built by glycine 387, isoleucine 411, and leucine 420.

It belongs to the class IV-like SAM-binding methyltransferase superfamily. RNA methyltransferase TrmH family.

Its subcellular location is the mitochondrion. The enzyme catalyses a uridine in rRNA + S-adenosyl-L-methionine = a 2'-O-methyluridine in rRNA + S-adenosyl-L-homocysteine + H(+). In terms of biological role, S-adenosyl-L-methionine-dependent 2'-O-ribose methyltransferase that catalyzes the formation of 2'-O-methylguanosine at position 1485 (Gm1485) in the mitochondrial large subunit ribosomal RNA (mtLSU rRNA), a conserved modification in the peptidyl transferase domain of the mtLSU rRNA. Also required for formation of 2'-O-methyluridine at position 1484 (Um1484) mediated by MRM2. This Danio rerio (Zebrafish) protein is rRNA methyltransferase 3B, mitochondrial.